The following is a 209-amino-acid chain: Outer-membrane lipoprotein carrier protein (209 aa).

The signal sequence occupies residues 1-24 (MTRYVISRLSAIALLALAPALALA).

This sequence belongs to the LolA family. In terms of assembly, monomer.

It is found in the periplasm. In terms of biological role, participates in the translocation of lipoproteins from the inner membrane to the outer membrane. Only forms a complex with a lipoprotein if the residue after the N-terminal Cys is not an aspartate (The Asp acts as a targeting signal to indicate that the lipoprotein should stay in the inner membrane). This chain is Outer-membrane lipoprotein carrier protein, found in Bordetella avium (strain 197N).